A 472-amino-acid chain; its full sequence is Glutamate--tRNA ligase (472 aa).

The short motif at 8 to 18 is the 'HIGH' region element; that stretch reads PSPTGFLHIGS. The short motif at 239–243 is the 'KMSKS' region element; the sequence is KLSKR. Residue Lys-242 participates in ATP binding.

The protein belongs to the class-I aminoacyl-tRNA synthetase family. Glutamate--tRNA ligase type 1 subfamily. In terms of assembly, monomer.

The protein localises to the cytoplasm. It catalyses the reaction tRNA(Glu) + L-glutamate + ATP = L-glutamyl-tRNA(Glu) + AMP + diphosphate. Functionally, catalyzes the attachment of glutamate to tRNA(Glu) in a two-step reaction: glutamate is first activated by ATP to form Glu-AMP and then transferred to the acceptor end of tRNA(Glu). In Solibacter usitatus (strain Ellin6076), this protein is Glutamate--tRNA ligase.